The following is a 157-amino-acid chain: ATP synthase subunit b (157 aa).

A helical membrane pass occupies residues 7–27; that stretch reads LIAQLVVFFILAWVTMKFVWP.

This sequence belongs to the ATPase B chain family. In terms of assembly, F-type ATPases have 2 components, F(1) - the catalytic core - and F(0) - the membrane proton channel. F(1) has five subunits: alpha(3), beta(3), gamma(1), delta(1), epsilon(1). F(0) has three main subunits: a(1), b(2) and c(10-14). The alpha and beta chains form an alternating ring which encloses part of the gamma chain. F(1) is attached to F(0) by a central stalk formed by the gamma and epsilon chains, while a peripheral stalk is formed by the delta and b chains.

The protein resides in the cell inner membrane. Functionally, f(1)F(0) ATP synthase produces ATP from ADP in the presence of a proton or sodium gradient. F-type ATPases consist of two structural domains, F(1) containing the extramembraneous catalytic core and F(0) containing the membrane proton channel, linked together by a central stalk and a peripheral stalk. During catalysis, ATP synthesis in the catalytic domain of F(1) is coupled via a rotary mechanism of the central stalk subunits to proton translocation. Component of the F(0) channel, it forms part of the peripheral stalk, linking F(1) to F(0). This chain is ATP synthase subunit b, found in Aromatoleum aromaticum (strain DSM 19018 / LMG 30748 / EbN1) (Azoarcus sp. (strain EbN1)).